A 249-amino-acid chain; its full sequence is Quinate/shikimate dehydrogenase (249 aa).

Positions 32 and 68 each coordinate substrate. Residues 93–96 (AGGA), 116–119 (NRRD), K166, 193–196 (CVYN), and G216 each bind NAD(+).

It belongs to the shikimate dehydrogenase family. As to quaternary structure, homodimer.

The catalysed reaction is L-quinate + NAD(+) = 3-dehydroquinate + NADH + H(+). It carries out the reaction L-quinate + NADP(+) = 3-dehydroquinate + NADPH + H(+). It catalyses the reaction shikimate + NADP(+) = 3-dehydroshikimate + NADPH + H(+). The enzyme catalyses shikimate + NAD(+) = 3-dehydroshikimate + NADH + H(+). Its pathway is metabolic intermediate biosynthesis; chorismate biosynthesis; chorismate from D-erythrose 4-phosphate and phosphoenolpyruvate: step 4/7. The actual biological function of YdiB remains unclear, nor is it known whether 3-dehydroshikimate or quinate represents the natural substrate. Catalyzes the reversible NAD-dependent reduction of both 3-dehydroshikimate (DHSA) and 3-dehydroquinate to yield shikimate (SA) and quinate, respectively. It can use both NAD or NADP for catalysis, however it has higher catalytic efficiency with NAD. The protein is Quinate/shikimate dehydrogenase of Shigella flexneri serotype 5b (strain 8401).